A 4644-amino-acid polypeptide reads, in one-letter code: Cytoplasmic dynein 1 heavy chain 1 (4644 aa).

Ser-2 is subject to N-acetylserine. A stem region spans residues 2 to 1865; the sequence is SEPGGGEDGS…SIQMANAKFN (1864 aa). Coiled coils occupy residues 48 to 69, 179 to 200, 453 to 476, and 541 to 564; these read AALE…FLSD, SVEK…NIEI, AHRK…QLRA, and TEAW…RITA. Ser-68 carries the post-translational modification Phosphoserine. The interaction with DYNC1I2 stretch occupies residues 446–701; the sequence is MVWRINPAHR…NTQEIFDDWA (256 aa). The tract at residues 649-800 is interaction with DYNC1LI2; that stretch reads AKQIDRQLTA…EKVEERNTIS (152 aa). N6-acetyllysine is present on Lys-1123. Positions 1169-1201 form a coiled coil; that stretch reads TYVQSLKRKIKQFEKQVELYRNGQRLLEKQRFQ. The residue at position 1228 (Ser-1228) is a Phosphoserine. Coiled coils occupy residues 1229-1250 and 1355-1371; these read AIQQ…AVES and RKLR…LKNF. AAA stretches follow at residues 1866-2097, 2178-2450, 2554-2803, and 2897-3166; these read YGFE…VLVS, EELK…LTRL, EVET…WVRG, and VFYE…GGRT. Residues 1904–1911 and 2222–2229 contribute to the ATP site; these read GPAGTGKT and GPSGSGKS. The segment at 2388–2408 is disordered; the sequence is GEDEAQRRRKGKEDEGEEAAS. ATP is bound by residues 2593–2600 and 2935–2942; these read GPPGSGKT and GVSGAGKT. 3 coiled-coil regions span residues 3187-3273, 3394-3498, and 3735-3798; these read EKRS…ADKQ, AIAQ…KNQM, and EFQL…VSQQ. The stalk stretch occupies residues 3187 to 3498; sequence EKRSELEEQQ…KTSETFKNQM (312 aa). The residue at position 3478 (Lys-3478) is an N6-acetyllysine. 2 AAA regions span residues 3551-3780 and 4003-4219; these read LSNA…EVTR and AHMF…TVDT. Phosphoserine is present on Ser-4160. Position 4281 is an N6-acetyllysine (Lys-4281). The residue at position 4364 (Thr-4364) is a Phosphothreonine. Ser-4366 is modified (phosphoserine).

Belongs to the dynein heavy chain family. As to quaternary structure, homodimer. The cytoplasmic dynein 1 complex consists of two catalytic heavy chains (HCs) and a number of non-catalytic subunits presented by intermediate chains (ICs), light intermediate chains (LICs) and light chains (LCs); the composition seems to vary in respect to the IC, LIC and LC composition. The heavy chain homodimer serves as a scaffold for the probable homodimeric assembly of the respective non-catalytic subunits. The ICs and LICs bind directly to the HC dimer and dynein LCs assemble on the IC dimer. Interacts with DYNC1LI1; DYNC1LI1 and DYNC1LI2 bind mutually exclusive to DYNC1H1. Interacts with DYNC1LI2; DYNC1LI1 and DYNC1LI2 bind mutually exclusive to DYNC1H1. Interacts with DYNC1I2. Interacts with BICD2. Interacts with DNALI1.

Its subcellular location is the cytoplasm. It is found in the cytoskeleton. Functionally, cytoplasmic dynein 1 acts as a motor for the intracellular retrograde motility of vesicles and organelles along microtubules. Dynein has ATPase activity; the force-producing power stroke is thought to occur on release of ADP. Plays a role in mitotic spindle assembly and metaphase plate congression. This is Cytoplasmic dynein 1 heavy chain 1 (Dync1h1) from Mus musculus (Mouse).